The following is a 421-amino-acid chain: MHIASVTSRCSRAGAEALRQGAQLAADARDTCRAGALLLRGSPCAIGWVAGWLSAEFPARVVTGHALSRISPRSIGRFGTSWAAQRADQILHAALVDAFGPDFRDLVWHPTGEQSEAARRSGLLNLPHIPGPHRRYAAQTSDIPYGPGGRENLLDIWRRPDLAPGRRAPVLIQVPGGAWTINGKRPQAYPLMSRMVELGWICVSINYSKSPRCTWPAHIVDVKRAIAWVRENIADYGGDPDFITITGGSAGAHLAALAALSANDPALQPGFESADTAVQAAAPYYGVYDLTNAENMHEMMMPFLEHFVMRSRYVDNPGLFKAASPISYVHSEAPPFFVLHGEKDPMVPSAQSRAFSAALRDAGAATVSYAELPNAHHAFDLAATVRSRMVAEAVSDFLGVIYGRRMGARKGSLALSSPPAS.

Active-site residues include Ser249, Asp344, and His377.

This sequence belongs to the 'GDXG' lipolytic enzyme family.

The catalysed reaction is hexadecanoate ester + H2O = an aliphatic alcohol + hexadecanoate + H(+). Shows lipase activity. Is highly immunogenic and may play an important role in the virulence and pathogenesis of M.tuberculosis infection, by altering the balance of cytokines. Significantly down-regulates the expression level of pro-inflammatory cytokines (TNF-alpha and IFN-gamma) and up-regulates the level of anti-inflammatory cytokines such as IL-4 and IL-10 as compared to LPS stimulated macrophages. Also inhibits the expression of iNOS, TLR2 and transcription factor NF-kappa-B in LPS stimulated macrophages whereas the expression of TLR-4 remains unchanged. This is Esterase LipQ from Mycobacterium tuberculosis (strain ATCC 25618 / H37Rv).